A 184-amino-acid chain; its full sequence is Putative axial regulator YABBY 2 (184 aa).

The C4-type zinc-finger motif lies at 15-42 (CSFCTTILAVSVPYASLFTLVTVRCGHC). Composition is skewed to polar residues over residues 76-94 (LVTR…NLSE) and 171-184 (LDQS…NGYY). Disordered stretches follow at residues 76–115 (LVTR…RQRV) and 162–184 (LDGN…NGYY).

Belongs to the YABBY family. Interacts with SPL/NZZ and SPEAR2. Expressed at low levels in abaxial regions of lateral aerial organ primordia leading to cotyledons, leaves, flower meristems, sepals, petals, stamen and carpels, but not in roots.

It localises to the nucleus. Its function is as follows. Involved in the abaxial cell fate determination during embryogenesis and organogenesis. This chain is Putative axial regulator YABBY 2 (YAB2), found in Arabidopsis thaliana (Mouse-ear cress).